A 122-amino-acid chain; its full sequence is Large ribosomal subunit protein uL14 (122 aa).

Belongs to the universal ribosomal protein uL14 family. In terms of assembly, part of the 50S ribosomal subunit. Forms a cluster with proteins L3 and L19. In the 70S ribosome, L14 and L19 interact and together make contacts with the 16S rRNA in bridges B5 and B8.

Its function is as follows. Binds to 23S rRNA. Forms part of two intersubunit bridges in the 70S ribosome. In Colwellia psychrerythraea (strain 34H / ATCC BAA-681) (Vibrio psychroerythus), this protein is Large ribosomal subunit protein uL14.